A 239-amino-acid chain; its full sequence is MKNNLPIIALDFASAEETLAFLAPFQQEPLFVKVGMELFYQEGPSIVKQLKERNCELFLDLKLHDIPTTVNKAMKRLASLGVDLVNVHAAGGKKMMQAALEGLEEGTPAGKKRPSLIAVTQLTSTSEQIMKDELLIEKSLIDTVVHYSKQAEESGLDGVVCSVHEAKAIYQAVSPSFLTVTPGIRMSEDAANDQVRVATPAIAREKGSSAIVVGRSITKAEDPVKAYKAVRLEWEGIKS.

Residues Asp-11, Lys-33, 60–69 (DLKLHDIPTT), Thr-123, Arg-185, Gln-194, Gly-214, and Arg-215 contribute to the substrate site. Residue Lys-62 is the Proton donor of the active site.

It belongs to the OMP decarboxylase family. Type 1 subfamily. Homodimer.

The enzyme catalyses orotidine 5'-phosphate + H(+) = UMP + CO2. It functions in the pathway pyrimidine metabolism; UMP biosynthesis via de novo pathway; UMP from orotate: step 2/2. Catalyzes the decarboxylation of orotidine 5'-monophosphate (OMP) to uridine 5'-monophosphate (UMP). This Bacillus subtilis (strain 168) protein is Orotidine 5'-phosphate decarboxylase (pyrF).